The sequence spans 129 residues: SOSS complex subunit C homolog (129 aa).

Residues 105 to 129 form a disordered region; the sequence is RLEPLPSPATTPTTPNAPPSHNISK.

The protein belongs to the SOSS-C family.

This Drosophila erecta (Fruit fly) protein is SOSS complex subunit C homolog.